Here is a 387-residue protein sequence, read N- to C-terminus: 3-ketoacyl-CoA thiolase (387 aa).

Cys-91 (acyl-thioester intermediate) is an active-site residue. Active-site proton acceptor residues include His-343 and Cys-373.

The protein belongs to the thiolase-like superfamily. Thiolase family. Heterotetramer of two alpha chains (FadB) and two beta chains (FadA).

The protein resides in the cytoplasm. The enzyme catalyses an acyl-CoA + acetyl-CoA = a 3-oxoacyl-CoA + CoA. Its pathway is lipid metabolism; fatty acid beta-oxidation. Catalyzes the final step of fatty acid oxidation in which acetyl-CoA is released and the CoA ester of a fatty acid two carbons shorter is formed. This is 3-ketoacyl-CoA thiolase from Shewanella sp. (strain ANA-3).